We begin with the raw amino-acid sequence, 341 residues long: GTP 3',8-cyclase (341 aa).

In terms of domain architecture, Radical SAM core spans 11-231; the sequence is QKSRPLRDLR…RIINEDMPIE (221 aa). Arg20 is a GTP binding site. Cys27 and Cys31 together coordinate [4Fe-4S] cluster. Tyr33 is a binding site for S-adenosyl-L-methionine. Cys34 contacts [4Fe-4S] cluster. GTP is bound at residue Arg75. Residue Gly79 coordinates S-adenosyl-L-methionine. Thr106 lines the GTP pocket. Ser130 contacts S-adenosyl-L-methionine. Lys167 lines the GTP pocket. Residue Met201 participates in S-adenosyl-L-methionine binding. 2 residues coordinate [4Fe-4S] cluster: Cys265 and Cys268. Residue 270–272 participates in GTP binding; sequence RAR. Cys282 lines the [4Fe-4S] cluster pocket.

This sequence belongs to the radical SAM superfamily. MoaA family. Monomer and homodimer. It depends on [4Fe-4S] cluster as a cofactor.

It catalyses the reaction GTP + AH2 + S-adenosyl-L-methionine = (8S)-3',8-cyclo-7,8-dihydroguanosine 5'-triphosphate + 5'-deoxyadenosine + L-methionine + A + H(+). It functions in the pathway cofactor biosynthesis; molybdopterin biosynthesis. Functionally, catalyzes the cyclization of GTP to (8S)-3',8-cyclo-7,8-dihydroguanosine 5'-triphosphate. The protein is GTP 3',8-cyclase of Bacillus licheniformis (strain ATCC 14580 / DSM 13 / JCM 2505 / CCUG 7422 / NBRC 12200 / NCIMB 9375 / NCTC 10341 / NRRL NRS-1264 / Gibson 46).